Consider the following 338-residue polypeptide: Fructose-1,6-bisphosphatase class 1 (338 aa).

Mg(2+) contacts are provided by E92, D115, L117, and D118. Residues 118–121 (DGSS), N211, Y244, and K274 contribute to the substrate site. Position 280 (E280) interacts with Mg(2+).

The protein belongs to the FBPase class 1 family. As to quaternary structure, homotetramer. The cofactor is Mg(2+).

The protein resides in the cytoplasm. It catalyses the reaction beta-D-fructose 1,6-bisphosphate + H2O = beta-D-fructose 6-phosphate + phosphate. Its pathway is carbohydrate biosynthesis; gluconeogenesis. The sequence is that of Fructose-1,6-bisphosphatase class 1 from Photobacterium profundum (strain SS9).